A 328-amino-acid polypeptide reads, in one-letter code: GMP reductase (328 aa).

Cysteine 174 serves as the catalytic Thioimidate intermediate. 203–226 (IIADGGIRTHGDIAKSIRFGASMV) is a binding site for NADP(+).

The protein belongs to the IMPDH/GMPR family. GuaC type 2 subfamily.

The enzyme catalyses IMP + NH4(+) + NADP(+) = GMP + NADPH + 2 H(+). In terms of biological role, catalyzes the irreversible NADPH-dependent deamination of GMP to IMP. It functions in the conversion of nucleobase, nucleoside and nucleotide derivatives of G to A nucleotides, and in maintaining the intracellular balance of A and G nucleotides. In Staphylococcus saprophyticus subsp. saprophyticus (strain ATCC 15305 / DSM 20229 / NCIMB 8711 / NCTC 7292 / S-41), this protein is GMP reductase.